The chain runs to 170 residues: Co-chaperone protein HscB homolog (170 aa).

The region spanning 5 to 79 is the J domain; that stretch reads DHFSLFGLPT…RARYLCEQAG (75 aa).

It belongs to the HscB family. In terms of assembly, interacts with HscA and stimulates its ATPase activity.

Co-chaperone involved in the maturation of iron-sulfur cluster-containing proteins. Seems to help targeting proteins to be folded toward HscA. The polypeptide is Co-chaperone protein HscB homolog (Bordetella bronchiseptica (strain ATCC BAA-588 / NCTC 13252 / RB50) (Alcaligenes bronchisepticus)).